Consider the following 257-residue polypeptide: AKLQTGTAYLPGKHAPLQWTQFDPLEFLEELKKINYQTDSWEELLNKAEVGQGYMNRPCLNPTDPECPVTAPNKNSTKPPDVALILSGGCYGLSKKYMRWQEELIVGGTVKNSNGTLLRAQALQTMFQLMTPKQMYEHFRGYEDVLHINWNEDKAAAILEAWQRMYVEVVHQSVPQNSTQKVLSFTTTTLDDILKSFSDISVIRVASGYLLMLAYACLTMLRWDCAKSQGAVGLAGVLLVALSVAAGLGLCSLIGIS.

At 1–199 (AKLQTGTAYL…LDDILKSFSD (199 aa)) the chain is on the extracellular side. Residues asparagine 75, asparagine 114, and asparagine 177 are each glycosylated (N-linked (GlcNAc...) asparagine). Residues 200–220 (ISVIRVASGYLLMLAYACLTM) traverse the membrane as a helical segment. Residues 201–257 (SVIRVASGYLLMLAYACLTMLRWDCAKSQGAVGLAGVLLVALSVAAGLGLCSLIGIS) enclose the SSD domain. The Cytoplasmic segment spans residues 221-235 (LRWDCAKSQGAVGLA). The chain crosses the membrane as a helical span at residues 236–256 (GVLLVALSVAAGLGLCSLIGI).

It belongs to the patched family. In terms of processing, glycosylation is necessary for SHH binding. In the eye, detected in neural retina, iris, retinal pigment epithelium, but not in lens.

It is found in the membrane. Acts as a receptor for sonic hedgehog (SHH), indian hedgehog (IHH) and desert hedgehog (DHH). Associates with the smoothened protein (SMO) to transduce the hedgehog's proteins signal. This Cynops pyrrhogaster (Japanese fire-bellied newt) protein is Protein patched homolog 1 (PTC1).